Reading from the N-terminus, the 664-residue chain is Macrolide export ATP-binding/permease protein MacB (664 aa).

Residues 8-246 (LEVHNLVREF…ELNKDPDAAP (239 aa)) enclose the ABC transporter domain. 44–51 (GQSGSGKS) provides a ligand contact to ATP. Helical transmembrane passes span 287–307 (FLTM…VALG), 543–563 (IAVI…LVSV), 587–607 (FLIE…LLSL), and 629–649 (SIVA…FLPA).

It belongs to the ABC transporter superfamily. Macrolide exporter (TC 3.A.1.122) family. In terms of assembly, homodimer. Part of the tripartite efflux system MacAB-TolC, which is composed of an inner membrane transporter, MacB, a periplasmic membrane fusion protein, MacA, and an outer membrane component, TolC. The complex forms a large protein conduit and can translocate molecules across both the inner and outer membranes. Interacts with MacA.

The protein resides in the cell inner membrane. In terms of biological role, part of the tripartite efflux system MacAB-TolC. MacB is a non-canonical ABC transporter that contains transmembrane domains (TMD), which form a pore in the inner membrane, and an ATP-binding domain (NBD), which is responsible for energy generation. Confers resistance against macrolides. The protein is Macrolide export ATP-binding/permease protein MacB of Acinetobacter baylyi (strain ATCC 33305 / BD413 / ADP1).